A 422-amino-acid chain; its full sequence is MSKRNQARKVGRFMTMPNDPFKYSFDRLEDVADHISDVLRCPITIEDVNHKLLAYSTHSDCTDPARTSTIIGRRVPEKVINKLWKDGTIPALLKTDQPIRVKQIDEVGLSNRVAISIWKNKQVLGFIWALEIQKTLSDEDLLTLQMAAKAVKNKLLKLQIRKTKNEERSQEFFWKMLTGHIHQEDDMADGFHKLGMAAPSEFSVMIIRINGELTEKIEQQLQYLQETTQQVYVLLATVDSNELIILTSPKTDHPFQDLKQFALSTQKQLKERYKIEDVSIAFGGIYNSISFVSRSYQEALSVLKTKERFAEETKHLFSFSELGIYQYLDVLNEKRKQAGHYNYSLSKLEQYDRDHQSNMVETLERFIEADSNVNTASKLLNIHVNTLNYRLKRISQIAEIDLKNVNQKFTIYLDIKLRHMDL.

The protein belongs to the CdaR family.

Functionally, activates ald expression in response to alanine availability and is important for normal sporulation in B.subtilis. In Bacillus subtilis (strain 168), this protein is DNA-binding transcriptional activator AdeR.